The primary structure comprises 135 residues: Probable 5-hydroxyisourate hydrolase R09H10.3 (135 aa).

The first 20 residues, 1 to 20 (MNKFSLFFALTATLMTITES), serve as a signal peptide directing secretion. Substrate contacts are provided by histidine 30, arginine 68, and tyrosine 132.

The protein belongs to the transthyretin family. 5-hydroxyisourate hydrolase subfamily. In terms of assembly, homotetramer.

It carries out the reaction 5-hydroxyisourate + H2O = 5-hydroxy-2-oxo-4-ureido-2,5-dihydro-1H-imidazole-5-carboxylate + H(+). Its function is as follows. Catalyzes the hydrolysis of 5-hydroxyisourate (HIU) to 2-oxo-4-hydroxy-4-carboxy-5-ureidoimidazoline (OHCU). This chain is Probable 5-hydroxyisourate hydrolase R09H10.3, found in Caenorhabditis elegans.